Consider the following 189-residue polypeptide: Transcription factor FapR (189 aa).

It belongs to the FapR family.

Functionally, transcriptional factor involved in regulation of membrane lipid biosynthesis by repressing genes involved in fatty acid and phospholipid metabolism. The protein is Transcription factor FapR of Listeria innocua serovar 6a (strain ATCC BAA-680 / CLIP 11262).